The following is a 469-amino-acid chain: Phenolic glucoside malonyltransferase 1 (469 aa).

Met1 bears the N-acetylmethionine mark. The Proton acceptor role is filled by His169. Positions 169–173 (HAVLD) match the HXXXD motif motif. 291–292 (ST) contributes to the malonyl-CoA binding site. Asp413 serves as the catalytic Proton acceptor. Residues 413–417 (DFGWG) carry the DFGWG motif motif.

Belongs to the plant acyltransferase family. Phenolic glucoside malonyltransferase subfamily.

The catalysed reaction is a flavonol 3-O-beta-D-glucoside + malonyl-CoA = a flavonol 3-O-(6-O-malonyl-beta-D-glucoside) + CoA. The enzyme catalyses a flavonol 7-O-beta-D-glucoside + malonyl-CoA = a flavonol 7-O-(6-O-malonyl-beta-D-glucoside) + CoA. Malonyltransferase acting on xenobiotic glucosides. Has activity toward 2-Naphthol glucoside (2NAG), 1-Naphthol glucoside (1NAG), kaempferol 7-O-glucoside, kaempferol 3-O-glucoside, hydroxycoumarin glucosides, phenol-glucosides and isoflavone glucoside (daidzin), but not toward 4-coumaroyl glucoside, kaempferol 3,7-O-diglucoside, salicylic acid glucoside and phlorizin. In vivo, seems to be involved in the malonylation of 2-Naphthol glucoside while PMAT2 would be involved in the malonylation of 4-methylumbelliferone glucoside or 4-nitrophenyl glucoside. This is Phenolic glucoside malonyltransferase 1 (PMAT1) from Arabidopsis thaliana (Mouse-ear cress).